Consider the following 247-residue polypeptide: 3-deoxy-manno-octulosonate cytidylyltransferase (247 aa).

Belongs to the KdsB family.

It is found in the cytoplasm. The enzyme catalyses 3-deoxy-alpha-D-manno-oct-2-ulosonate + CTP = CMP-3-deoxy-beta-D-manno-octulosonate + diphosphate. The protein operates within nucleotide-sugar biosynthesis; CMP-3-deoxy-D-manno-octulosonate biosynthesis; CMP-3-deoxy-D-manno-octulosonate from 3-deoxy-D-manno-octulosonate and CTP: step 1/1. Its pathway is bacterial outer membrane biogenesis; lipopolysaccharide biosynthesis. Its function is as follows. Activates KDO (a required 8-carbon sugar) for incorporation into bacterial lipopolysaccharide in Gram-negative bacteria. In Chlorobium limicola (strain DSM 245 / NBRC 103803 / 6330), this protein is 3-deoxy-manno-octulosonate cytidylyltransferase.